Consider the following 433-residue polypeptide: Trigger factor (433 aa).

A PPIase FKBP-type domain is found at 163–248; the sequence is GDFVTFDFKG…IKEIKVKELP (86 aa).

The protein belongs to the FKBP-type PPIase family. Tig subfamily.

It is found in the cytoplasm. It carries out the reaction [protein]-peptidylproline (omega=180) = [protein]-peptidylproline (omega=0). Functionally, involved in protein export. Acts as a chaperone by maintaining the newly synthesized protein in an open conformation. Functions as a peptidyl-prolyl cis-trans isomerase. The polypeptide is Trigger factor (Geotalea uraniireducens (strain Rf4) (Geobacter uraniireducens)).